We begin with the raw amino-acid sequence, 539 residues long: Protein mushroom body miniature (539 aa).

Residues 1–11 (MHNSGGQSGWN) show a composition bias toward polar residues. The disordered stretch occupies residues 1 to 345 (MHNSGGQSGW…EDDKKARKQK (345 aa)). Basic and acidic residues predominate over residues 67–79 (KFRDPQQELDNHQ). Positions 80–89 (PNKRGGRRNR) are enriched in basic residues. A compositionally biased stretch (gly residues) spans 90-101 (GGGGGGGGWGGR). Basic and acidic residues predominate over residues 199–208 (IKKEKEMEHK). Residues 268-289 (VASTPKPKAVKPVSSSDSSTSD) show a composition bias toward low complexity. Ser288 and Ser290 each carry phosphoserine. Phosphothreonine is present on residues Thr292 and Thr327. Residues 327–336 (TDEEESTEPE) show a composition bias toward acidic residues. Ser332 is modified (phosphoserine). Thr333 carries the post-translational modification Phosphothreonine. 2 CCHC-type zinc fingers span residues 354 to 367 (CGICDKKGHTSFQC) and 371 to 386 (CRNCSGSYHGLKNCPN). Positions 421–513 (VTAPVSAKPK…AASLPPQVFP (93 aa)) are disordered. The segment covering 428–447 (KPKKDKKASIKKIKKSSQKR) has biased composition (basic residues). The span at 456–480 (DEEDDEEDDDEDEDDSSESDDSESS) shows a compositional bias: acidic residues.

Post-translationally, may be phosphorylated in vivo by CkIIalpha. mbm and CkIIalpha colocalize to the nucleolus and mbm is phosphorylated in vitro by CkIIalpha. As to expression, shows widespread expression in third instar larval brain with no apparent difference between males and females (at protein level). Detected at low levels in the mushroom body neuropil and is also expressed in many cells of the brain outside the mushroom body (at protein level). Not detected in third instar larval brain cells in anaphase (at protein level).

It is found in the nucleus. The protein localises to the nucleolus. The protein resides in the cytoplasm. Functionally, required for small ribosomal subunit biogenesis in neuroblasts. Plays a role in mushroom body development. This is Protein mushroom body miniature from Drosophila melanogaster (Fruit fly).